A 203-amino-acid chain; its full sequence is Lectin (203 aa).

Residues 1–20 (MINILHVIAGLALASVGVDA) form the signal peptide. Positions 21 to 53 (RQVGVGADVLHAVENTIDSITGVEASHSALEVG) are excised as a propeptide.

In terms of assembly, monomer.

N-acetyl-D-glucosamine-specific lectin. Specifically agglutinates rabbit erythrocytes. This is Lectin (UPL1) from Ulva pertusa (Sea lettuce).